The chain runs to 149 residues: Angiogenin (149 aa).

Positions 1-24 (MVMGLGPLVLIFVLGLGVTPPTLA) are cleaved as a signal peptide. Gln-25 bears the Pyrrolidone carboxylic acid mark. His-37 (proton acceptor) is an active-site residue. Arg-45 provides a ligand contact to tRNA. 3 disulfide bridges follow: Cys-50–Cys-105, Cys-63–Cys-116, and Cys-81–Cys-131. A Nucleolar localization signal motif is present at residues 55 to 59 (KRRDL). TRNA is bound by residues Cys-105 and Ile-127. Catalysis depends on His-138, which acts as the Proton donor.

The protein belongs to the pancreatic ribonuclease family. As to quaternary structure, homodimer. Interacts with RNH1; inhibiting ANG ribonuclease activity. Interacts with PCNA.

It localises to the secreted. The protein resides in the nucleus. Its subcellular location is the nucleolus. The protein localises to the cytoplasm. It is found in the stress granule. With respect to regulation, has weak tRNA ribonuclease activity by itself due to partial autoinhibition by its C-terminus, which folds into a short alpha-helix that partially occludes the substrate-binding site. In absence of stress, the ribonuclease activity is inhibited by RNH1 in the cytoplasm. In response to stress, dissociates from RNH1 in the cytoplasm and associates with cytoplasmic ribosomes with vacant A-sites: ribosomes directly activate the tRNA ribonuclease activity of ANG by refolding the C-terminal alpha-helix. In response to stress, the angiogenic activity of ANG is inhibited by RNH1 in the nucleus. Functionally, secreted ribonuclease that can either promote or restrict cell proliferation of target cells, depending on the context. Endocytosed in target cells via its receptor PLXNB2 and translocates to the cytoplasm or nucleus. Under stress conditions, localizes to the cytoplasm and promotes the assembly of stress granules (SGs): specifically cleaves a subset of tRNAs within anticodon loops to produce tRNA-derived stress-induced fragments (tiRNAs), resulting in translation repression and inhibition of cell proliferation. tiRNas also prevent formation of apoptosome, thereby promoting cell survival. Preferentially cleaves RNAs between a pyrimidine and an adenosine residue, suggesting that it cleaves the anticodon loop of tRNA(Ala) (32-UUAGCAU-38) after positions 33 and 36. Cleaves a subset of tRNAs, including tRNA(Ala), tRNA(Glu), tRNA(Gly), tRNA(Lys), tRNA(Val), tRNA(His), tRNA(Asp) and tRNA(Sec). Under growth conditions and in differentiated cells, translocates to the nucleus and stimulates ribosomal RNA (rRNA) transcription, including that containing the initiation site sequences of 45S rRNA, thereby promoting cell growth and proliferation. Angiogenin induces vascularization of normal and malignant tissues via its ability to promote rRNA transcription. Involved in hematopoietic stem and progenitor cell (HSPC) growth and survival by promoting rRNA transcription in growth conditions and inhibiting translation in response to stress, respectively. Mediates the crosstalk between myeloid and intestinal epithelial cells to protect the intestinal epithelial barrier integrity: secreted by myeloid cells and promotes intestinal epithelial cells proliferation and survival. Also mediates osteoclast-endothelial cell crosstalk in growing bone: produced by osteoclasts and protects the neighboring vascular cells against senescence by promoting rRNA transcription. This chain is Angiogenin (ANG), found in Oryctolagus cuniculus (Rabbit).